The following is a 206-amino-acid chain: High frequency lysogenization protein HflD homolog (206 aa).

The protein belongs to the HflD family.

The protein resides in the cytoplasm. It localises to the cell inner membrane. The protein is High frequency lysogenization protein HflD homolog of Pseudomonas paraeruginosa (strain DSM 24068 / PA7) (Pseudomonas aeruginosa (strain PA7)).